A 900-amino-acid chain; its full sequence is Translation initiation factor IF-2 (900 aa).

The interval 48–310 (HLNRDRGNAP…KPSSLQQSFN (263 aa)) is disordered. Residues 68–82 (STLNVPSTGGKSKSV) show a composition bias toward polar residues. Basic and acidic residues-rich tracts occupy residues 85-98 (EVRK…RDPI) and 108-164 (QARR…KEKV). Polar residues predominate over residues 165–176 (TNQQNENMTKPA). A compositionally biased stretch (basic and acidic residues) spans 177-237 (QSEKAKREAE…SATKPEESAD (61 aa)). Residues 263 to 277 (TRTRAAKVTKQKKGN) show a composition bias toward basic residues. Over residues 278-291 (RQSESKADREEARA) the composition is skewed to basic and acidic residues. The region spanning 399–568 (FRAPVVTIMG…LLQAEVLELK (170 aa)) is the tr-type G domain. A G1 region spans residues 408–415 (GHVDHGKT). 408-415 (GHVDHGKT) lines the GTP pocket. The G2 stretch occupies residues 433–437 (GITQH). The segment at 454–457 (DTPG) is G3. Residues 454–458 (DTPGH) and 508–511 (NKID) contribute to the GTP site. Residues 508 to 511 (NKID) are G4. The G5 stretch occupies residues 544-546 (SAK).

This sequence belongs to the TRAFAC class translation factor GTPase superfamily. Classic translation factor GTPase family. IF-2 subfamily.

The protein resides in the cytoplasm. Its function is as follows. One of the essential components for the initiation of protein synthesis. Protects formylmethionyl-tRNA from spontaneous hydrolysis and promotes its binding to the 30S ribosomal subunits. Also involved in the hydrolysis of GTP during the formation of the 70S ribosomal complex. This is Translation initiation factor IF-2 from Pectobacterium atrosepticum (strain SCRI 1043 / ATCC BAA-672) (Erwinia carotovora subsp. atroseptica).